The primary structure comprises 789 residues: UPF0313 protein VC_1711 (789 aa).

The Radical SAM core domain occupies A363–A642. C377, C381, and C384 together coordinate [4Fe-4S] cluster. Positions P669–R789 are disordered. Positions K683–H698 are enriched in basic residues. Polar residues-rich tracts occupy residues R716–G726, P733–S763, and R778–R789.

This sequence belongs to the UPF0313 family. [4Fe-4S] cluster is required as a cofactor.

The chain is UPF0313 protein VC_1711 from Vibrio cholerae serotype O1 (strain ATCC 39315 / El Tor Inaba N16961).